The chain runs to 154 residues: Crossover junction endodeoxyribonuclease RuvC (154 aa).

Active-site residues include aspartate 7, glutamate 67, and aspartate 139. Residues aspartate 7, glutamate 67, and aspartate 139 each coordinate Mg(2+).

This sequence belongs to the RuvC family. Homodimer which binds Holliday junction (HJ) DNA. The HJ becomes 2-fold symmetrical on binding to RuvC with unstacked arms; it has a different conformation from HJ DNA in complex with RuvA. In the full resolvosome a probable DNA-RuvA(4)-RuvB(12)-RuvC(2) complex forms which resolves the HJ. Mg(2+) is required as a cofactor.

Its subcellular location is the cytoplasm. It carries out the reaction Endonucleolytic cleavage at a junction such as a reciprocal single-stranded crossover between two homologous DNA duplexes (Holliday junction).. Its function is as follows. The RuvA-RuvB-RuvC complex processes Holliday junction (HJ) DNA during genetic recombination and DNA repair. Endonuclease that resolves HJ intermediates. Cleaves cruciform DNA by making single-stranded nicks across the HJ at symmetrical positions within the homologous arms, yielding a 5'-phosphate and a 3'-hydroxyl group; requires a central core of homology in the junction. The consensus cleavage sequence is 5'-(A/T)TT(C/G)-3'. Cleavage occurs on the 3'-side of the TT dinucleotide at the point of strand exchange. HJ branch migration catalyzed by RuvA-RuvB allows RuvC to scan DNA until it finds its consensus sequence, where it cleaves and resolves the cruciform DNA. The polypeptide is Crossover junction endodeoxyribonuclease RuvC (Prochlorococcus marinus (strain MIT 9303)).